We begin with the raw amino-acid sequence, 380 residues long: Cytochrome b (380 aa).

A run of 4 helical transmembrane segments spans residues 34–54 (FGSL…LLAM), 78–99 (WLIR…FLHI), 114–134 (WNTG…GYVL), and 179–199 (FFAL…IHLI). Heme b is bound by residues His84 and His98. Residues His183 and His197 each contribute to the heme b site. Residue His202 coordinates a ubiquinone. 4 helical membrane passes run 227 to 247 (LKDI…ALFS), 289 to 309 (LGGV…PFLH), 321 to 341 (LSQT…WVGS), and 348 to 368 (FIII…ILFP).

It belongs to the cytochrome b family. The cytochrome bc1 complex contains 11 subunits: 3 respiratory subunits (MT-CYB, CYC1 and UQCRFS1), 2 core proteins (UQCRC1 and UQCRC2) and 6 low-molecular weight proteins (UQCRH/QCR6, UQCRB/QCR7, UQCRQ/QCR8, UQCR10/QCR9, UQCR11/QCR10 and a cleavage product of UQCRFS1). This cytochrome bc1 complex then forms a dimer. Heme b is required as a cofactor.

The protein localises to the mitochondrion inner membrane. In terms of biological role, component of the ubiquinol-cytochrome c reductase complex (complex III or cytochrome b-c1 complex) that is part of the mitochondrial respiratory chain. The b-c1 complex mediates electron transfer from ubiquinol to cytochrome c. Contributes to the generation of a proton gradient across the mitochondrial membrane that is then used for ATP synthesis. This chain is Cytochrome b (MT-CYB), found in Tragopan temminckii (Temminck's tragopan).